Here is a 368-residue protein sequence, read N- to C-terminus: Anhydro-N-acetylmuramic acid kinase (368 aa).

11–18 is a binding site for ATP; the sequence is GTSLDGID.

Belongs to the anhydro-N-acetylmuramic acid kinase family.

The enzyme catalyses 1,6-anhydro-N-acetyl-beta-muramate + ATP + H2O = N-acetyl-D-muramate 6-phosphate + ADP + H(+). The protein operates within amino-sugar metabolism; 1,6-anhydro-N-acetylmuramate degradation. Its pathway is cell wall biogenesis; peptidoglycan recycling. Catalyzes the specific phosphorylation of 1,6-anhydro-N-acetylmuramic acid (anhMurNAc) with the simultaneous cleavage of the 1,6-anhydro ring, generating MurNAc-6-P. Is required for the utilization of anhMurNAc either imported from the medium or derived from its own cell wall murein, and thus plays a role in cell wall recycling. The protein is Anhydro-N-acetylmuramic acid kinase of Sulfurimonas denitrificans (strain ATCC 33889 / DSM 1251) (Thiomicrospira denitrificans (strain ATCC 33889 / DSM 1251)).